Here is a 189-residue protein sequence, read N- to C-terminus: NADH-quinone oxidoreductase subunit B (189 aa).

Cys-39, Cys-40, Cys-104, and Cys-135 together coordinate [4Fe-4S] cluster.

The protein belongs to the complex I 20 kDa subunit family. In terms of assembly, NDH-1 is composed of 14 different subunits. Subunits NuoB, C, D, E, F, and G constitute the peripheral sector of the complex. It depends on [4Fe-4S] cluster as a cofactor.

It localises to the cell inner membrane. It carries out the reaction a quinone + NADH + 5 H(+)(in) = a quinol + NAD(+) + 4 H(+)(out). NDH-1 shuttles electrons from NADH, via FMN and iron-sulfur (Fe-S) centers, to quinones in the respiratory chain. The immediate electron acceptor for the enzyme in this species is believed to be a menaquinone. Couples the redox reaction to proton translocation (for every two electrons transferred, four hydrogen ions are translocated across the cytoplasmic membrane), and thus conserves the redox energy in a proton gradient. The protein is NADH-quinone oxidoreductase subunit B of Chlorobium luteolum (strain DSM 273 / BCRC 81028 / 2530) (Pelodictyon luteolum).